We begin with the raw amino-acid sequence, 345 residues long: Anthranilate phosphoribosyltransferase 1 (345 aa).

5-phospho-alpha-D-ribose 1-diphosphate-binding positions include glycine 86, 89 to 90 (GD), threonine 94, 96 to 99 (NIST), 114 to 122 (KHGGRGVSS), and serine 126. Anthranilate is bound at residue glycine 86. Serine 98 is a Mg(2+) binding site. Arginine 172 is an anthranilate binding site. The Mg(2+) site is built by aspartate 231 and glutamate 232.

It belongs to the anthranilate phosphoribosyltransferase family. As to quaternary structure, homodimer. Mg(2+) is required as a cofactor.

It carries out the reaction N-(5-phospho-beta-D-ribosyl)anthranilate + diphosphate = 5-phospho-alpha-D-ribose 1-diphosphate + anthranilate. Its pathway is amino-acid biosynthesis; L-tryptophan biosynthesis; L-tryptophan from chorismate: step 2/5. In terms of biological role, catalyzes the transfer of the phosphoribosyl group of 5-phosphorylribose-1-pyrophosphate (PRPP) to anthranilate to yield N-(5'-phosphoribosyl)-anthranilate (PRA). The sequence is that of Anthranilate phosphoribosyltransferase 1 from Ralstonia nicotianae (strain ATCC BAA-1114 / GMI1000) (Ralstonia solanacearum).